The chain runs to 393 residues: uncharacterized protein (393 aa).

This is an uncharacterized protein from Methanocaldococcus jannaschii (strain ATCC 43067 / DSM 2661 / JAL-1 / JCM 10045 / NBRC 100440) (Methanococcus jannaschii).